The following is a 348-amino-acid chain: Haptoglobin-related protein (348 aa).

Positions 1–18 (MSDLGAVISLLLWGRQLF) form a signal peptide, not cleaved. The Sushi domain maps to 34–87 (FPKPPEIANGYVEHLFRYQCKNYYRLRTEGDGVYTLNDKKQWINKAVGDKLPEC). The Peptidase S1 domain occupies 104–346 (ILGGHLDAKG…IQHWVQKTIA (243 aa)). 2 disulfides stabilise this stretch: C251-C282 and C293-C323.

It belongs to the peptidase S1 family. In terms of tissue distribution, in adult liver the amount of HPR mRNA is at the lower limit of detection, therefore the extent of its expression is at most less than 1000-fold that of the HP1F gene. No HPR mRNA can be detected in fetal liver. Expressed in Hep-G2 and leukemia MOLT-4 cell lines.

It localises to the secreted. Functionally, primate-specific plasma protein associated with apolipoprotein L-I (apoL-I)-containing high-density lipoprotein (HDL). This HDL particle, termed trypanosome lytic factor-1 (TLF-1), mediates human innate immune protection against many species of African trypanosomes. Binds hemoglobin with high affinity and may contribute to the clearance of cell-free hemoglobin to allow hepatic recycling of heme iron. In Homo sapiens (Human), this protein is Haptoglobin-related protein (HPR).